We begin with the raw amino-acid sequence, 700 residues long: Acyl-coenzyme A oxidase 2 (700 aa).

The protein belongs to the acyl-CoA oxidase family. In terms of assembly, heteropentamer composed of five different subunits. FAD serves as cofactor.

The protein resides in the peroxisome. The enzyme catalyses a 2,3-saturated acyl-CoA + O2 = a (2E)-enoyl-CoA + H2O2. It participates in lipid metabolism; peroxisomal fatty acid beta-oxidation. Functionally, oxidizes strain chain acyl-CoAs with a chain length of 10 to 14 carbons. Also active toward the 2S isomers of acyl-CoA-esters containing a 2-methyl group. The protein is Acyl-coenzyme A oxidase 2 (POX2) of Yarrowia lipolytica (strain CLIB 122 / E 150) (Yeast).